The sequence spans 498 residues: MAKYAAAIDQGTTSTRCMIFDHSGNVICYDQKEHEQIYPRPGWVEHSPDEIWERTQSVIRGALSKGGLSASDIVAVGITNQRETTVVWNRKTGRPVYNAIVWQDTRTDQICNELAADGGQDRFRPKVGLPLATYFSGPKIRWILDNVPGAREAAEAGDVVFGNIDTFLTWWLTGGPNGGVHVTDVTNASRTMLMNLETLDWDDEILGIMGIPRQMLPKIVPSSMVYGTATGELAGVPVAGILGDQQAAMVGQTCFDVGEAKNTYGTGSFMLLNTGTKLVPSKSGLLTTVCYKFGDQPAVYALEGSIAITGALVQWLRDNLGLITSSAEVEALANLVEDNGGIYFVPAFSGLFAPYWRSDARGVIVGLTRYVNKGHLARAVLEATAYQTREVLDAMEQDSGVKLTALKVDGGMVYNNTLMQFQADILGVPVIRPKVAETTSLGAAYAAGLAVGFWSNTDEMRANWGVDHTWTPQMDEATRERLYRGWKKAVTRTFDWVE.

Thr-12 provides a ligand contact to ADP. 3 residues coordinate ATP: Thr-12, Thr-13, and Ser-14. Residue Thr-12 coordinates sn-glycerol 3-phosphate. Arg-16 contributes to the ADP binding site. Sn-glycerol 3-phosphate-binding residues include Arg-82, Glu-83, Tyr-134, and Asp-244. Glycerol contacts are provided by Arg-82, Glu-83, Tyr-134, Asp-244, and Gln-245. 2 residues coordinate ADP: Thr-266 and Gly-310. ATP-binding residues include Thr-266, Gly-310, Gln-314, and Gly-411. Gly-411 and Asn-415 together coordinate ADP.

Belongs to the FGGY kinase family.

It catalyses the reaction glycerol + ATP = sn-glycerol 3-phosphate + ADP + H(+). The protein operates within polyol metabolism; glycerol degradation via glycerol kinase pathway; sn-glycerol 3-phosphate from glycerol: step 1/1. With respect to regulation, inhibited by fructose 1,6-bisphosphate (FBP). Functionally, key enzyme in the regulation of glycerol uptake and metabolism. Catalyzes the phosphorylation of glycerol to yield sn-glycerol 3-phosphate. The polypeptide is Glycerol kinase (Chloroflexus aurantiacus (strain ATCC 29364 / DSM 637 / Y-400-fl)).